Reading from the N-terminus, the 57-residue chain is Protein CgkB (57 aa).

This Pseudoalteromonas carrageenovora (Alteromonas carrageenovora) protein is Protein CgkB (cgkB).